The chain runs to 386 residues: Ferredoxin--NADP reductase (386 aa).

Positions 9-67 (SRMFRYEVVGLRQTAETEKTNYAIRNSGSQFFNVPYDRMNQFMQQITRWGGKIVSIQPL) constitute a CpcD-like domain. Residues 104–228 (NNPCIGKVIS…TGPVGKEMLL (125 aa)) enclose the FAD-binding FR-type domain. FAD is bound by residues 163–166 (RLYS), 184–186 (CVR), Tyr-190, 202–204 (VCS), and Thr-243. 2 residues coordinate NADP(+): Ser-166 and Arg-186. NADP(+)-binding positions include Thr-243, 275–276 (VA), 305–306 (SR), 315–319 (KMYIQ), 344–345 (GL), and Glu-384.

This sequence belongs to the ferredoxin--NADP reductase type 1 family. The cofactor is FAD.

It is found in the cellular thylakoid membrane. The enzyme catalyses 2 reduced [2Fe-2S]-[ferredoxin] + NADP(+) + H(+) = 2 oxidized [2Fe-2S]-[ferredoxin] + NADPH. This is Ferredoxin--NADP reductase (petH) from Thermosynechococcus vestitus (strain NIES-2133 / IAM M-273 / BP-1).